The primary structure comprises 750 residues: Photosystem I P700 chlorophyll a apoprotein A1 (750 aa).

8 helical membrane-spanning segments follow: residues 70-93, 156-179, 195-219, 291-309, 346-369, 385-411, 433-455, and 531-549; these read VFSA…FHGA, LYCT…FHYH, LNHH…HVSL, IAHH…GHMY, WHAQ…HHMY, LSLF…IFMV, AIIS…LYIH, and FLVH…LILL. [4Fe-4S] cluster is bound by residues cysteine 573 and cysteine 582. Helical transmembrane passes span 589–610 and 664–686; these read HVFL…HFSW and LSAY…MFLF. Position 675 (histidine 675) interacts with chlorophyll a'. Methionine 683 and tyrosine 691 together coordinate chlorophyll a. Position 692 (tryptophan 692) interacts with phylloquinone. A helical transmembrane segment spans residues 724–744; sequence AVGVTHYLLGGIATTWAFFLA.

It belongs to the PsaA/PsaB family. As to quaternary structure, the PsaA/B heterodimer binds the P700 chlorophyll special pair and subsequent electron acceptors. PSI consists of a core antenna complex that captures photons, and an electron transfer chain that converts photonic excitation into a charge separation. The eukaryotic PSI reaction center is composed of at least 11 subunits. P700 is a chlorophyll a/chlorophyll a' dimer, A0 is one or more chlorophyll a, A1 is one or both phylloquinones and FX is a shared 4Fe-4S iron-sulfur center. serves as cofactor.

The protein resides in the plastid. It is found in the chloroplast thylakoid membrane. It catalyses the reaction reduced [plastocyanin] + hnu + oxidized [2Fe-2S]-[ferredoxin] = oxidized [plastocyanin] + reduced [2Fe-2S]-[ferredoxin]. Its function is as follows. PsaA and PsaB bind P700, the primary electron donor of photosystem I (PSI), as well as the electron acceptors A0, A1 and FX. PSI is a plastocyanin-ferredoxin oxidoreductase, converting photonic excitation into a charge separation, which transfers an electron from the donor P700 chlorophyll pair to the spectroscopically characterized acceptors A0, A1, FX, FA and FB in turn. Oxidized P700 is reduced on the lumenal side of the thylakoid membrane by plastocyanin. In Panax ginseng (Korean ginseng), this protein is Photosystem I P700 chlorophyll a apoprotein A1.